Here is a 1336-residue protein sequence, read N- to C-terminus: Cytokinesis protein sepH (1336 aa).

Residues 1 to 10 (MVSRSSETSE) show a composition bias toward low complexity. Residues 1 to 46 (MVSRSSETSEGPPPPSKIPGTPAKTRLSRLNSSPAKQDKPKDDRVV) form a disordered region. Residues 36–46 (KQDKPKDDRVV) are compositionally biased toward basic and acidic residues. Positions 59-309 (YQLGDCLGKG…ARKLLKHPWI (251 aa)) constitute a Protein kinase domain. ATP contacts are provided by residues 65-73 (LGKGAFGSV) and Lys88. Asp181 serves as the catalytic Proton acceptor. Residues 368–402 (SRYTPTKDILPSPVSKHVTDRFRSPDSTEEDNWDD) form a disordered region. A compositionally biased stretch (basic and acidic residues) spans 384-393 (HVTDRFRSPD). The stretch at 654–682 (AQLEEGLDEVDLEANIARDKYARLRGQVE) forms a coiled coil. Residues 1194-1205 (ERSESFSLEKRK) are compositionally biased toward basic and acidic residues. Residues 1194–1336 (ERSESFSLEK…PTHADSDWAS (143 aa)) are disordered. The span at 1213–1236 (TSTTPPGYLANQSAPATPQINRFN) shows a compositional bias: polar residues. Composition is skewed to low complexity over residues 1253-1264 (PSLSSSALALRP) and 1272-1285 (PSLS…AGPS). The segment covering 1315 to 1327 (SRRRSILPQRRRP) has biased composition (basic residues).

It belongs to the protein kinase superfamily. Ser/Thr protein kinase family. CDC7 subfamily. Mg(2+) serves as cofactor.

The catalysed reaction is L-seryl-[protein] + ATP = O-phospho-L-seryl-[protein] + ADP + H(+). It catalyses the reaction L-threonyl-[protein] + ATP = O-phospho-L-threonyl-[protein] + ADP + H(+). In terms of biological role, required for early events during cytokinesis including localization of cytoskeletal components to the cytokinetic ring. This Aspergillus niger (strain ATCC MYA-4892 / CBS 513.88 / FGSC A1513) protein is Cytokinesis protein sepH.